The primary structure comprises 176 residues: Putative REP-associated tyrosine transposase (176 aa).

Residues histidine 59 and histidine 61 each contribute to the Mg(2+) site. Catalysis depends on tyrosine 148, which acts as the Nucleophile.

The protein belongs to the transposase 17 family. RAYT subfamily. In terms of assembly, homodimer. Mg(2+) is required as a cofactor.

In terms of biological role, transposase responsible for transposition an insertion sequence (IS) element. Transposition occurs in 2 main steps, excision from the donor DNA 'top strand' into a single strand circle and its subsequent reinsertion into the DNA target. This increases the copy number of the IS. This chain is Putative REP-associated tyrosine transposase, found in Haemophilus influenzae (strain ATCC 51907 / DSM 11121 / KW20 / Rd).